The following is a 439-amino-acid chain: DNA primase DnaG (439 aa).

Residues 169 to 243 (DSIIVVEGRA…DIDYVARAPY (75 aa)) form the Toprim domain. Mg(2+) is bound by residues Glu175, Asp217, and Asp219.

Belongs to the archaeal DnaG primase family. Forms a ternary complex with MCM helicase and DNA. Mg(2+) serves as cofactor.

It carries out the reaction ssDNA + n NTP = ssDNA/pppN(pN)n-1 hybrid + (n-1) diphosphate.. Functionally, RNA polymerase that catalyzes the synthesis of short RNA molecules used as primers for DNA polymerase during DNA replication. This Methanococcus maripaludis (strain C7 / ATCC BAA-1331) protein is DNA primase DnaG.